Here is a 348-residue protein sequence, read N- to C-terminus: Phenylalanine--tRNA ligase alpha subunit (348 aa).

Glu-259 contacts Mg(2+).

Belongs to the class-II aminoacyl-tRNA synthetase family. Phe-tRNA synthetase alpha subunit type 1 subfamily. As to quaternary structure, tetramer of two alpha and two beta subunits. It depends on Mg(2+) as a cofactor.

The protein localises to the cytoplasm. It catalyses the reaction tRNA(Phe) + L-phenylalanine + ATP = L-phenylalanyl-tRNA(Phe) + AMP + diphosphate + H(+). The sequence is that of Phenylalanine--tRNA ligase alpha subunit from Levilactobacillus brevis (strain ATCC 367 / BCRC 12310 / CIP 105137 / JCM 1170 / LMG 11437 / NCIMB 947 / NCTC 947) (Lactobacillus brevis).